A 591-amino-acid polypeptide reads, in one-letter code: Oxaloacetate decarboxylase alpha chain (591 aa).

The region spanning 3-263 (IAITDVVLRD…DTGLDILKLE (261 aa)) is the Pyruvate carboxyltransferase domain. The region spanning 518-591 (PAGAGTPVTA…SVGDTLMTLA (74 aa)) is the Biotinyl-binding domain. Lys-557 carries the N6-biotinyllysine modification.

In terms of assembly, composed of three chains (alpha, beta, and gamma). Biotin serves as cofactor.

It catalyses the reaction oxaloacetate + 2 Na(+)(in) + H(+) = pyruvate + 2 Na(+)(out) + CO2. In terms of biological role, catalyzes the decarboxylation of oxaloacetate coupled to Na(+) translocation. The polypeptide is Oxaloacetate decarboxylase alpha chain (oadA1) (Salmonella typhi).